Reading from the N-terminus, the 162-residue chain is Xanthine-guanine phosphoribosyltransferase (162 aa).

5-phospho-alpha-D-ribose 1-diphosphate-binding positions include 41–42 (RG) and 92–100 (DDLVDTGNT). Residue D93 coordinates Mg(2+). The guanine site is built by D96 and I139. The xanthine site is built by D96 and I139. GMP is bound by residues 96-100 (DTGNT) and 138-139 (WI).

It belongs to the purine/pyrimidine phosphoribosyltransferase family. XGPT subfamily. As to quaternary structure, homotetramer. It depends on Mg(2+) as a cofactor.

It is found in the cell inner membrane. The enzyme catalyses GMP + diphosphate = guanine + 5-phospho-alpha-D-ribose 1-diphosphate. It catalyses the reaction XMP + diphosphate = xanthine + 5-phospho-alpha-D-ribose 1-diphosphate. The catalysed reaction is IMP + diphosphate = hypoxanthine + 5-phospho-alpha-D-ribose 1-diphosphate. It functions in the pathway purine metabolism; GMP biosynthesis via salvage pathway; GMP from guanine: step 1/1. It participates in purine metabolism; XMP biosynthesis via salvage pathway; XMP from xanthine: step 1/1. Its function is as follows. Purine salvage pathway enzyme that catalyzes the transfer of the ribosyl-5-phosphate group from 5-phospho-alpha-D-ribose 1-diphosphate (PRPP) to the N9 position of the 6-oxopurines guanine and xanthine to form the corresponding ribonucleotides GMP (guanosine 5'-monophosphate) and XMP (xanthosine 5'-monophosphate), with the release of PPi. To a lesser extent, also acts on hypoxanthine. The polypeptide is Xanthine-guanine phosphoribosyltransferase (Chromohalobacter salexigens (strain ATCC BAA-138 / DSM 3043 / CIP 106854 / NCIMB 13768 / 1H11)).